The sequence spans 444 residues: MGIKIGLVSLGCPKNLVDSEIMLGILKKAGYEITAREKEADVLIVNTCSFINDAKEESIRTIIELARNKINGRCRAILVAGCLAQRYPAELMAEMPEIDGLVGTGQVPEIARAVRRVLEGGKVLLTGSPGYLHDAYFPKVLATPPYTAYLKIAEGCDNRCSYCVIPAVRGPFRSRRMEDIMSEAEELANKGVKELIIVAQDTTRYGIDLYGKPMLDALLEGLTGIKGPVWLRLLYTYPSLITDDLIYLMAKSRKICRYLDIPFQHASNRVLQLMNRRGSKEEAARLVAKLRADIPGIVLRTTFIVGFPGETEEDFQELLDFMAEAKFDRAGVFTYSREEGTAAAEMPGQVPEEVKLLRRERAMMLQQEISLQKNLKRVGEVIEVLVEGKSLKGRGMYTGRSEGDAPGIDGKVFFKSGFNLQPGDFARVLIKGGTEYDLTGETVL.

Residues 3-119 (IKIGLVSLGC…IARAVRRVLE (117 aa)) form the MTTase N-terminal domain. Cys12, Cys48, Cys82, Cys156, Cys160, and Cys163 together coordinate [4Fe-4S] cluster. The region spanning 142-372 (ATPPYTAYLK…MMLQQEISLQ (231 aa)) is the Radical SAM core domain. In terms of domain architecture, TRAM spans 375–444 (LKRVGEVIEV…EYDLTGETVL (70 aa)).

The protein belongs to the methylthiotransferase family. RimO subfamily. [4Fe-4S] cluster is required as a cofactor.

Its subcellular location is the cytoplasm. The enzyme catalyses L-aspartate(89)-[ribosomal protein uS12]-hydrogen + (sulfur carrier)-SH + AH2 + 2 S-adenosyl-L-methionine = 3-methylsulfanyl-L-aspartate(89)-[ribosomal protein uS12]-hydrogen + (sulfur carrier)-H + 5'-deoxyadenosine + L-methionine + A + S-adenosyl-L-homocysteine + 2 H(+). In terms of biological role, catalyzes the methylthiolation of an aspartic acid residue of ribosomal protein uS12. The protein is Ribosomal protein uS12 methylthiotransferase RimO of Pelotomaculum thermopropionicum (strain DSM 13744 / JCM 10971 / SI).